Reading from the N-terminus, the 906-residue chain is Cadherin-2 (906 aa).

The N-terminal stretch at 1–25 (MCRIAGAPRTLLPLLAALLQASVEA) is a signal peptide. Residues 26 to 159 (SGEIALCKTG…HNGYLQRQKR (134 aa)) constitute a propeptide that is removed on maturation. S96 and S135 each carry phosphoserine. 5 Cadherin domains span residues 160 to 267 (DWVI…RPEF), 268 to 382 (LHQV…PPEF), 383 to 497 (TAMT…NPYF), 498 to 603 (APNP…DNAP), and 604 to 714 (QVLP…DVDR). The Extracellular portion of the chain corresponds to 160–724 (DWVIPPINLP…IVGAGLGTGA (565 aa)). E170 lines the Ca(2+) pocket. N190 carries N-linked (GlcNAc...) asparagine glycosylation. Ca(2+)-binding residues include D226, E228, D259, M260, N261, D262, and N263. Residue N273 is glycosylated (N-linked (GlcNAc...) asparagine). D293, D295, and N301 together coordinate Ca(2+). The N-linked (GlcNAc...) asparagine glycan is linked to N325. Residue D353 participates in Ca(2+) binding. N-linked (GlcNAc...) asparagine glycosylation is found at N402, N572, N622, N651, and N692. A helical transmembrane segment spans residues 725–745 (IIAILLCIIILLILVLMFVVW). At 746-906 (MKRRDKERQA…LAEMYGGGDD (161 aa)) the chain is on the cytoplasmic side. Low complexity predominate over residues 863-880 (SGSTAGSLSSLNSSSSGG). A disordered region spans residues 863–884 (SGSTAGSLSSLNSSSSGGEQDY).

In terms of assembly, homodimer (via extracellular region). Can also form heterodimers with other cadherins (via extracellular region). Dimerization occurs in trans, i.e. with a cadherin chain from another cell. Interacts with CDCP1. Interacts with PCDH8; this complex may also include TAOK2. The interaction with PCDH8 may lead to internalization through TAOK2/p38 MAPK pathway. Identified in a complex containing FGFR4, NCAM1, CDH2, PLCG1, FRS2, SRC, SHC1, GAP43 and CTTN. May interact with OBSCN (via protein kinase domain 2). Interacts with FBXO45. Cleaved by MMP24. Ectodomain cleavage leads to the generation of a soluble 90 kDa N-terminal soluble fragment and a 45 kDa membrane-bound C-terminal fragment 1 (CTF1), which is further cleaved by gamma-secretase into a 35 kDa. Cleavage in neural stem cells by MMP24 affects CDH2-mediated anchorage of neural stem cells to ependymocytes in the adult subependymal zone, leading to modulate neural stem cell quiescence. Post-translationally, may be phosphorylated by OBSCN.

Its subcellular location is the cell membrane. It is found in the sarcolemma. The protein localises to the cell junction. The protein resides in the cell surface. It localises to the desmosome. Its subcellular location is the adherens junction. Functionally, calcium-dependent cell adhesion protein; preferentially mediates homotypic cell-cell adhesion by dimerization with a CDH2 chain from another cell. Cadherins may thus contribute to the sorting of heterogeneous cell types. Acts as a regulator of neural stem cells quiescence by mediating anchorage of neural stem cells to ependymocytes in the adult subependymal zone: upon cleavage by MMP24, CDH2-mediated anchorage is affected, leading to modulate neural stem cell quiescence. Plays a role in cell-to-cell junction formation between pancreatic beta cells and neural crest stem (NCS) cells, promoting the formation of processes by NCS cells. Required for proper neurite branching. Required for pre- and postsynaptic organization. CDH2 may be involved in neuronal recognition mechanism. In hippocampal neurons, may regulate dendritic spine density. The sequence is that of Cadherin-2 (CDH2) from Otolemur garnettii (Small-eared galago).